A 347-amino-acid chain; its full sequence is NADH-ubiquinone oxidoreductase chain 2 (347 aa).

A run of 11 helical transmembrane segments spans residues 3–23, 25–45, 59–79, 96–116, 122–142, 149–169, 178–198, 201–221, 237–257, 274–294, and 323–343; these read PPIL…VMTS, HWML…PILM, YFLT…INLL, ILMT…FWVP, ISLS…LSVL, INPN…GWGG, IMAY…LYNP, MFLN…LFMI, APLI…LPPL, EMII…YFYM, and MIFL…TPMI.

Belongs to the complex I subunit 2 family. In terms of assembly, core subunit of respiratory chain NADH dehydrogenase (Complex I) which is composed of 45 different subunits. Interacts with TMEM242.

The protein resides in the mitochondrion inner membrane. The catalysed reaction is a ubiquinone + NADH + 5 H(+)(in) = a ubiquinol + NAD(+) + 4 H(+)(out). In terms of biological role, core subunit of the mitochondrial membrane respiratory chain NADH dehydrogenase (Complex I) which catalyzes electron transfer from NADH through the respiratory chain, using ubiquinone as an electron acceptor. Essential for the catalytic activity and assembly of complex I. This chain is NADH-ubiquinone oxidoreductase chain 2, found in Civettictis civetta (African civet).